A 440-amino-acid polypeptide reads, in one-letter code: UDP-N-acetylglucosamine 1-carboxyvinyltransferase 1 (440 aa).

22-23 serves as a coordination point for phosphoenolpyruvate; sequence KN. R93 is a UDP-N-acetyl-alpha-D-glucosamine binding site. C117 acts as the Proton donor in catalysis. C117 carries the 2-(S-cysteinyl)pyruvic acid O-phosphothioketal modification. UDP-N-acetyl-alpha-D-glucosamine-binding positions include 122 to 126, D306, and V328; that span reads RPIDQ.

The protein belongs to the EPSP synthase family. MurA subfamily.

It is found in the cytoplasm. The catalysed reaction is phosphoenolpyruvate + UDP-N-acetyl-alpha-D-glucosamine = UDP-N-acetyl-3-O-(1-carboxyvinyl)-alpha-D-glucosamine + phosphate. The protein operates within cell wall biogenesis; peptidoglycan biosynthesis. Its function is as follows. Cell wall formation. Adds enolpyruvyl to UDP-N-acetylglucosamine. This is UDP-N-acetylglucosamine 1-carboxyvinyltransferase 1 from Halalkalibacterium halodurans (strain ATCC BAA-125 / DSM 18197 / FERM 7344 / JCM 9153 / C-125) (Bacillus halodurans).